The following is a 252-amino-acid chain: U2 small nuclear ribonucleoprotein A' (252 aa).

3 LRR repeats span residues 41 to 62, 63 to 84, and 87 to 108; these read PHDAIDFTDNDIQVLGNFPLSP, RIRTLLLARNRIAQIQSTLPNA, and NLKNLVLASNNIGELADLEVLG. In terms of domain architecture, LRRCT spans 121-159; it reads NPVTKKENYRYWVLWLCPQVRFLDYVKVKDAERQKAKEL.

The protein belongs to the U2 small nuclear ribonucleoprotein A family. Associated with the spliceosome.

The protein localises to the nucleus. Involved in pre-mRNA splicing. This Neurospora crassa (strain ATCC 24698 / 74-OR23-1A / CBS 708.71 / DSM 1257 / FGSC 987) protein is U2 small nuclear ribonucleoprotein A' (lea-1).